A 299-amino-acid polypeptide reads, in one-letter code: Recombination-associated protein RdgC (299 aa).

Belongs to the RdgC family.

The protein localises to the cytoplasm. The protein resides in the nucleoid. Functionally, may be involved in recombination. This Neisseria meningitidis serogroup B (strain ATCC BAA-335 / MC58) protein is Recombination-associated protein RdgC.